A 430-amino-acid chain; its full sequence is uncharacterized protein (430 aa).

Residues 1-19 form the signal peptide; the sequence is MKILLFVVLFFNVLVGIYS. A glycan (N-linked (GlcNAc...) asparagine) is linked at Asn39. The tract at residues 119 to 408 is disordered; that stretch reads LDPNSSPSPS…ELLEKNSDGN (290 aa). The span at 124–168 shows a compositional bias: pro residues; it reads SPSPSPSPSPSPSPSPSPSPSPSPSPSPSPSPSPSPSPSPSPSPS. 2 stretches are compositionally biased toward low complexity: residues 169–253 and 263–285; these read PSSS…TPSQ and PTPTQTPSQTPTQTQTPTPTQTP. Residues 286-303 show a composition bias toward polar residues; sequence ISSRPMSISTEKPSSSEE. An N-linked (GlcNAc...) asparagine glycan is attached at Asn312. Basic and acidic residues predominate over residues 316–325; it reads SEDKKKDSES. A compositionally biased stretch (low complexity) spans 326-370; sequence KSSQSESPSPSASASESESASESASASTSVSVSASPLPIMDSSSS. The N-linked (GlcNAc...) asparagine glycan is linked to Asn408.

The protein localises to the secreted. This is an uncharacterized protein from Dictyostelium discoideum (Social amoeba).